A 648-amino-acid polypeptide reads, in one-letter code: Zinc finger protein 202 (648 aa).

K22 participates in a covalent cross-link: Glycyl lysine isopeptide (Lys-Gly) (interchain with G-Cter in SUMO2). An SCAN box domain is found at 46–127 (HQNFRRFRYQ…VTLVEGLQKQ (82 aa)). Positions 146–221 (SEETVHLGVE…PDLPAERSSG (76 aa)) are disordered. Residues 165-182 (PVQSSTPEQSPEETTQSP) are compositionally biased toward polar residues. Positions 237–308 (VTFKDVAVCF…DIQEPQETQE (72 aa)) constitute a KRAB domain. C2H2-type zinc fingers lie at residues 397–419 (HDCSVCGKSFTCNSHLVRHLRTH) and 425–447 (YKCMECGKSYTRSSHLARHQKVH). Glycyl lysine isopeptide (Lys-Gly) (interchain with G-Cter in SUMO2) cross-links involve residues K454 and K460. Phosphoserine is present on S466. A C2H2-type 3 zinc finger spans residues 481–503 (YRCDDCGKHFRWTSDLVRHQRTH). Glycyl lysine isopeptide (Lys-Gly) (interchain with G-Cter in SUMO2) cross-links involve residues K507 and K521. C2H2-type zinc fingers lie at residues 509–531 (FFCTICGKSFSQKSVLTTHQRIH), 537–559 (YLCGECGEDFSEHRRYLAHRKTH), 565–587 (YLCSECGRCFTHSAAFAKHLRGH), 593–615 (CRCNECGKSFSRRDHLVRHQRTH), and 621–643 (FTCPTCGKSFSRGYHLIRHQRTH).

As to quaternary structure, interacts with SDP1. Highly expressed in testis. Also expressed in breast carcinoma cell lines.

It is found in the nucleus. Transcriptional repressor that binds to elements found predominantly in genes that participate in lipid metabolism. Among its targets are structural components of lipoprotein particles (apolipoproteins AIV, CIII, and E), enzymes involved in lipid processing (lipoprotein lipase, lecithin cholesteryl ester transferase), transporters involved in lipid homeostasis (ABCA1, ABCG1), and several genes involved in processes related to energy metabolism and vascular disease. This is Zinc finger protein 202 (ZNF202) from Homo sapiens (Human).